The chain runs to 417 residues: Serine hydroxymethyltransferase (417 aa).

Residues leucine 122 and glycine 126–leucine 128 each bind (6S)-5,6,7,8-tetrahydrofolate. At lysine 230 the chain carries N6-(pyridoxal phosphate)lysine. Residue serine 355–phenylalanine 357 coordinates (6S)-5,6,7,8-tetrahydrofolate.

This sequence belongs to the SHMT family. In terms of assembly, homodimer. Pyridoxal 5'-phosphate is required as a cofactor.

The protein resides in the cytoplasm. The enzyme catalyses (6R)-5,10-methylene-5,6,7,8-tetrahydrofolate + glycine + H2O = (6S)-5,6,7,8-tetrahydrofolate + L-serine. It functions in the pathway one-carbon metabolism; tetrahydrofolate interconversion. It participates in amino-acid biosynthesis; glycine biosynthesis; glycine from L-serine: step 1/1. Functionally, catalyzes the reversible interconversion of serine and glycine with tetrahydrofolate (THF) serving as the one-carbon carrier. This reaction serves as the major source of one-carbon groups required for the biosynthesis of purines, thymidylate, methionine, and other important biomolecules. Also exhibits THF-independent aldolase activity toward beta-hydroxyamino acids, producing glycine and aldehydes, via a retro-aldol mechanism. The polypeptide is Serine hydroxymethyltransferase (Francisella tularensis subsp. novicida (strain U112)).